A 95-amino-acid polypeptide reads, in one-letter code: MSHYDILQAPVISEKAYSAMERGVYSFWVSPKATKTEIKDAIQQAFGVRVIGISTMNVPGKRKRVGRFIGQRNDRKKAIVRLAEGQSIEALAGQA.

The protein belongs to the universal ribosomal protein uL23 family. In terms of assembly, part of the 50S ribosomal subunit. Contacts protein L29 and trigger factor when it is bound to the ribosome.

In terms of biological role, one of the early assembly protein it binds 23S rRNA. One of the proteins that surrounds the polypeptide exit tunnel on the outside of the subunit. Forms the main docking site for trigger factor binding to the ribosome. This is Large ribosomal subunit protein uL23 from Deinococcus radiodurans (strain ATCC 13939 / DSM 20539 / JCM 16871 / CCUG 27074 / LMG 4051 / NBRC 15346 / NCIMB 9279 / VKM B-1422 / R1).